The primary structure comprises 355 residues: S-adenosylmethionine:tRNA ribosyltransferase-isomerase (355 aa).

Belongs to the QueA family. In terms of assembly, monomer.

The protein localises to the cytoplasm. It catalyses the reaction 7-aminomethyl-7-carbaguanosine(34) in tRNA + S-adenosyl-L-methionine = epoxyqueuosine(34) in tRNA + adenine + L-methionine + 2 H(+). It participates in tRNA modification; tRNA-queuosine biosynthesis. Transfers and isomerizes the ribose moiety from AdoMet to the 7-aminomethyl group of 7-deazaguanine (preQ1-tRNA) to give epoxyqueuosine (oQ-tRNA). The protein is S-adenosylmethionine:tRNA ribosyltransferase-isomerase of Pectobacterium carotovorum subsp. carotovorum (strain PC1).